Reading from the N-terminus, the 333-residue chain is Electron transfer flavoprotein subunit alpha, mitochondrial (333 aa).

Residues 1-19 (MFRAAAPGQLRRAASLLRF) constitute a mitochondrion transit peptide. Residues 20–204 (QSTLVIAEHA…GISEWLDQKL (185 aa)) are domain I. Lys59 is subject to N6-acetyllysine; alternate. Lys59 is modified (N6-succinyllysine; alternate). An N6-acetyllysine modification is found at Lys62. Lys69 carries the post-translational modification N6-acetyllysine; alternate. Position 69 is an N6-succinyllysine; alternate (Lys69). Lys75 carries the post-translational modification N6-acetyllysine. At Lys85 the chain carries N6-acetyllysine; alternate. Lys85 carries the post-translational modification N6-succinyllysine; alternate. Thr93 bears the Phosphothreonine mark. An N6-acetyllysine mark is found at Lys101 and Lys139. Ser140 carries the phosphoserine modification. Residue Lys158 is modified to N6-acetyllysine; alternate. Lys158 is modified (N6-succinyllysine; alternate). Residue Lys164 is modified to N6-acetyllysine. Lys187 carries the N6-succinyllysine modification. The residue at position 203 (Lys203) is an N6-acetyllysine; alternate. An N6-succinyllysine; alternate modification is found at Lys203. The interval 205–333 (TKSDRPELTG…PEMTEILKKK (129 aa)) is domain II. Lys216 is modified (N6-succinyllysine). FAD is bound at residue Arg223. Residues Lys226 and Lys232 each carry the N6-acetyllysine; alternate modification. Residues Lys226 and Lys232 each carry the N6-succinyllysine; alternate modification. Residues Ser248, 263–266 (VGQT), 281–286 (SGAIQH), and Asn300 contribute to the FAD site. Lys301 carries the N6-succinyllysine modification. 318 to 319 (DL) provides a ligand contact to FAD.

This sequence belongs to the ETF alpha-subunit/FixB family. In terms of assembly, heterodimer composed of ETFA and ETFB. Identified in a complex that contains ETFA, ETFB and ETFRF1. Interaction with ETFRF1 promotes dissociation of the bound FAD and loss of electron transfer activity. Interacts with TASOR. Requires FAD as cofactor. Expressed in the spermatogonia, spermatocytes, ovary and granular cells within the cerebellum.

Its subcellular location is the mitochondrion matrix. Its function is as follows. Heterodimeric electron transfer flavoprotein that accepts electrons from several mitochondrial dehydrogenases, including acyl-CoA dehydrogenases, glutaryl-CoA and sarcosine dehydrogenase. It transfers the electrons to the main mitochondrial respiratory chain via ETF-ubiquinone oxidoreductase (ETF dehydrogenase). Required for normal mitochondrial fatty acid oxidation and normal amino acid metabolism. The polypeptide is Electron transfer flavoprotein subunit alpha, mitochondrial (Etfa) (Mus musculus (Mouse)).